The primary structure comprises 405 residues: Argininosuccinate synthase (405 aa).

8–16 (AYSGGLDTS) is an ATP binding site. Tyr86 and Ser91 together coordinate L-citrulline. Gly116 contacts ATP. Residues Thr118, Asn122, and Asp123 each contribute to the L-aspartate site. An L-citrulline-binding site is contributed by Asn122. Positions 126, 175, 184, 260, and 272 each coordinate L-citrulline.

Belongs to the argininosuccinate synthase family. Type 1 subfamily. In terms of assembly, homotetramer.

The protein localises to the cytoplasm. The enzyme catalyses L-citrulline + L-aspartate + ATP = 2-(N(omega)-L-arginino)succinate + AMP + diphosphate + H(+). Its pathway is amino-acid biosynthesis; L-arginine biosynthesis; L-arginine from L-ornithine and carbamoyl phosphate: step 2/3. In Koribacter versatilis (strain Ellin345), this protein is Argininosuccinate synthase.